Here is a 179-residue protein sequence, read N- to C-terminus: Large ribosomal subunit protein uL5 (179 aa).

In terms of assembly, contacts the P site tRNA. Forms a bridge to the 30S subunit in the 70S ribosome. Part of the 50S ribosomal subunit. Part of the 5S rRNA/L5/L18 subcomplex; in this organism only 2 proteins, L5 and L18 have been shown to be part of the 5S rRNA subcomplex, unlike E.coli and T.thermophilus where L25 (TL5) is also found. Has been shown to bind 5S rRNA.

In terms of biological role, this is one of the proteins that bind and probably mediate the attachment of the 5S RNA into the large ribosomal subunit, where it forms part of the central protuberance. In the 70S ribosome it contacts protein S13 of the 30S subunit (bridge B1b), connecting the 2 subunits; this bridge is implicated in subunit movement. Contacts the P site tRNA; the 5S rRNA and some of its associated proteins might help stabilize positioning of ribosome-bound tRNAs. This Geobacillus stearothermophilus (Bacillus stearothermophilus) protein is Large ribosomal subunit protein uL5 (rplE).